The primary structure comprises 434 residues: UDP-N-acetylenolpyruvoylglucosamine reductase (434 aa).

Residues 51–238 (IGAAPAGVVE…TAVEFQLTTD (188 aa)) form the FAD-binding PCMH-type domain. The active site involves R216. S299 acts as the Proton donor in catalysis. E425 is a catalytic residue.

It belongs to the MurB family. FAD serves as cofactor.

Its subcellular location is the cytoplasm. The enzyme catalyses UDP-N-acetyl-alpha-D-muramate + NADP(+) = UDP-N-acetyl-3-O-(1-carboxyvinyl)-alpha-D-glucosamine + NADPH + H(+). It functions in the pathway cell wall biogenesis; peptidoglycan biosynthesis. Its function is as follows. Cell wall formation. In Corynebacterium jeikeium (strain K411), this protein is UDP-N-acetylenolpyruvoylglucosamine reductase.